We begin with the raw amino-acid sequence, 367 residues long: Peptide chain release factor 2 (367 aa).

The residue at position 254 (Gln-254) is an N5-methylglutamine.

It belongs to the prokaryotic/mitochondrial release factor family. Methylated by PrmC. Methylation increases the termination efficiency of RF2.

It localises to the cytoplasm. Its function is as follows. Peptide chain release factor 2 directs the termination of translation in response to the peptide chain termination codons UGA and UAA. The protein is Peptide chain release factor 2 of Janthinobacterium sp. (strain Marseille) (Minibacterium massiliensis).